A 570-amino-acid polypeptide reads, in one-letter code: Laccase-3 (570 aa).

An N-terminal signal peptide occupies residues 1–25 (MESFRRFSLLSFIALLAYFAFLASA). 2 Plastocyanin-like domains span residues 33-149 (VITP…PRLG) and 159-310 (RDIP…YVNA). Residue N79 is glycosylated (N-linked (GlcNAc...) asparagine). Cu cation contacts are provided by H83, H85, H128, and H130. Residues N188, N298, N332, N383, N393, and N433 are each glycosylated (N-linked (GlcNAc...) asparagine). The Plastocyanin-like 3 domain maps to 419–554 (DFPPVPPVQF…AMVFLVENGR (136 aa)). Residues H471, H474, H476, H533, C534, H535, and H539 each coordinate Cu cation.

The protein belongs to the multicopper oxidase family. Requires Cu cation as cofactor. As to expression, mostly expressed in roots and siliques.

Its subcellular location is the secreted. It is found in the extracellular space. The protein localises to the apoplast. The enzyme catalyses 4 hydroquinone + O2 = 4 benzosemiquinone + 2 H2O. Lignin degradation and detoxification of lignin-derived products. The chain is Laccase-3 (LAC3) from Arabidopsis thaliana (Mouse-ear cress).